Consider the following 482-residue polypeptide: NADH-quinone oxidoreductase subunit D (482 aa).

The segment covering 1-16 (MTTNTSTSSTTDDLTT) has biased composition (low complexity). The interval 1–48 (MTTNTSTSSTTDDLTTGAPNGTGAPDGANGVGGPTGTVGGPGEHPAYE) is disordered. A compositionally biased stretch (gly residues) spans 29–42 (NGVGGPTGTVGGPG).

It belongs to the complex I 49 kDa subunit family. NDH-1 is composed of 14 different subunits. Subunits NuoB, C, D, E, F, and G constitute the peripheral sector of the complex.

It localises to the cell membrane. The catalysed reaction is a quinone + NADH + 5 H(+)(in) = a quinol + NAD(+) + 4 H(+)(out). Functionally, NDH-1 shuttles electrons from NADH, via FMN and iron-sulfur (Fe-S) centers, to quinones in the respiratory chain. The immediate electron acceptor for the enzyme in this species is believed to be a menaquinone. Couples the redox reaction to proton translocation (for every two electrons transferred, four hydrogen ions are translocated across the cytoplasmic membrane), and thus conserves the redox energy in a proton gradient. The polypeptide is NADH-quinone oxidoreductase subunit D (Frankia casuarinae (strain DSM 45818 / CECT 9043 / HFP020203 / CcI3)).